Consider the following 113-residue polypeptide: MNMEATAILRGARISPQKARLVAAQVRGLSAESAVNLLRFSSKKAACLIKKVVESAIANAENNHGSNIDDLKINTIIVDEGRMLKRFMARAKGRSSRIVKRSSHITVVVGPAK.

The protein belongs to the universal ribosomal protein uL22 family. Part of the 50S ribosomal subunit.

In terms of biological role, this protein binds specifically to 23S rRNA; its binding is stimulated by other ribosomal proteins, e.g. L4, L17, and L20. It is important during the early stages of 50S assembly. It makes multiple contacts with different domains of the 23S rRNA in the assembled 50S subunit and ribosome. Functionally, the globular domain of the protein is located near the polypeptide exit tunnel on the outside of the subunit, while an extended beta-hairpin is found that lines the wall of the exit tunnel in the center of the 70S ribosome. In Xylella fastidiosa (strain M12), this protein is Large ribosomal subunit protein uL22.